We begin with the raw amino-acid sequence, 282 residues long: Malonyl-[acyl-carrier protein] O-methyltransferase 1 (282 aa).

Belongs to the methyltransferase superfamily.

The catalysed reaction is malonyl-[ACP] + S-adenosyl-L-methionine = malonyl-[ACP] methyl ester + S-adenosyl-L-homocysteine. It functions in the pathway cofactor biosynthesis; biotin biosynthesis. Its function is as follows. Converts the free carboxyl group of a malonyl-thioester to its methyl ester by transfer of a methyl group from S-adenosyl-L-methionine (SAM). It allows to synthesize pimeloyl-ACP via the fatty acid synthetic pathway. In Coxiella burnetii (strain RSA 493 / Nine Mile phase I), this protein is Malonyl-[acyl-carrier protein] O-methyltransferase 1.